A 520-amino-acid polypeptide reads, in one-letter code: 2-isopropylmalate synthase (520 aa).

The 263-residue stretch at 12–274 (IRIFDTTLRD…DSAINTPRIV (263 aa)) folds into the Pyruvate carboxyltransferase domain. Residues Asp-21, His-209, His-211, and Asn-245 each coordinate Mn(2+). A regulatory domain region spans residues 396–520 (RLASMTISDV…VIAGKTAAVA (125 aa)).

Belongs to the alpha-IPM synthase/homocitrate synthase family. LeuA type 1 subfamily. Homodimer. Mn(2+) serves as cofactor.

The protein resides in the cytoplasm. It carries out the reaction 3-methyl-2-oxobutanoate + acetyl-CoA + H2O = (2S)-2-isopropylmalate + CoA + H(+). Its pathway is amino-acid biosynthesis; L-leucine biosynthesis; L-leucine from 3-methyl-2-oxobutanoate: step 1/4. Functionally, catalyzes the condensation of the acetyl group of acetyl-CoA with 3-methyl-2-oxobutanoate (2-ketoisovalerate) to form 3-carboxy-3-hydroxy-4-methylpentanoate (2-isopropylmalate). The chain is 2-isopropylmalate synthase from Xanthomonas oryzae pv. oryzae (strain MAFF 311018).